The sequence spans 205 residues: Small ribosomal subunit protein uS4 (205 aa).

The interval 18–46 (NIWGRPKSPVNRREYGPGQHGQRRKGKLS) is disordered. One can recognise an S4 RNA-binding domain in the interval 94 to 154 (RRLDTVVFRA…EASKQLAVVL (61 aa)).

It belongs to the universal ribosomal protein uS4 family. Part of the 30S ribosomal subunit. Contacts protein S5. The interaction surface between S4 and S5 is involved in control of translational fidelity.

In terms of biological role, one of the primary rRNA binding proteins, it binds directly to 16S rRNA where it nucleates assembly of the body of the 30S subunit. Its function is as follows. With S5 and S12 plays an important role in translational accuracy. This is Small ribosomal subunit protein uS4 from Bradyrhizobium sp. (strain ORS 278).